Reading from the N-terminus, the 343-residue chain is Ribosomal RNA small subunit methyltransferase C (343 aa).

Belongs to the methyltransferase superfamily. RsmC family. Monomer.

The protein resides in the cytoplasm. The enzyme catalyses guanosine(1207) in 16S rRNA + S-adenosyl-L-methionine = N(2)-methylguanosine(1207) in 16S rRNA + S-adenosyl-L-homocysteine + H(+). Functionally, specifically methylates the guanine in position 1207 of 16S rRNA in the 30S particle. The polypeptide is Ribosomal RNA small subunit methyltransferase C (Escherichia coli (strain 55989 / EAEC)).